Here is a 373-residue protein sequence, read N- to C-terminus: Schlafen-like protein 1 (373 aa).

A disordered region spans residues 1-67 (MAALFEENDS…ELSSEEVDIP (67 aa)). The segment at 247–373 (KAGAKIEFRT…NQVYRLESSV (127 aa)) is SLFN-like fold.

This sequence belongs to the Schlafen family. In terms of assembly, component of the trimeric PUCH (precursor of 21U RNA 5'-end cleavage holoenzyme) complex; consisting of tofu-1, tofu-2 and either slfl-3 or slfl-4; which is required for processing of piRNA precursors. Within the complex, interacts (via N-terminus) with tofu-2 (via N-terminus); the interaction stabilizes tofu-2 and may form a functional nuclease. Within the complex, required for the interaction of tofu-2 (via N-terminus) with slfl-3 (via N-terminus). Interacts (via residues 82-172) with the PETISCO complex subunit tofu-6 (via residues 120-314); the interaction between the PETISCO and PUCH complex members enhances piRNA production in vivo. Expressed in the germline.

It is found in the cytoplasm. Its function is as follows. Component of the trimeric PUCH (precursor of 21U RNA 5'-end cleavage holoenzyme) complex, that acts as an endoribonuclease processing the 5'-end of precursor Piwi-interacting RNAs (piRNAs). The PUCH complex consists of tofu-1, tofu-2 and either slfl-3 or slfl-4, with tofu-2 exhibiting endoribonuclease activity. PUCH-mediated processing strictly requires a 7-methyl-G cap (m7 G-cap) and an uracil at position three (U3). PUCH also exhibits a strict bias for piRNA precursors with an A or G at position 1. Mature piRNA production is enhanced by the interaction of PUCH with the PETISCO complex, which is stabilizing piRNA precursors and allows their processing by PUCH. The protein is Schlafen-like protein 1 of Caenorhabditis elegans.